A 553-amino-acid chain; its full sequence is Sensitive to high expression protein 9 homolog, mitochondrial (553 aa).

The disordered stretch occupies residues 61-174 (FFSTQPPKDT…TAQPELPSRT (114 aa)). Residues 62-84 (FSTQPPKDTPENMNNKETGSSNV) are compositionally biased toward polar residues. The segment covering 103-116 (AKEDTTDATNKSET) has biased composition (basic and acidic residues). Residues 133–160 (SDVSSASTSDSANSSETTTTTSETTPEN) are compositionally biased toward low complexity. Coiled coils occupy residues 210 to 241 (SAIE…HNYK) and 277 to 309 (RLDH…DLNA). A helical transmembrane segment spans residues 331-351 (WGTWGLMGVNVLLFLVLQFVA). Residues 352-523 (EPWRRKRLMK…RIDLKMRDVS (172 aa)) are Mitochondrial intermembrane-facing. 2 disordered regions span residues 408-428 (ALAS…RTEG) and 443-497 (AEEA…QTLS). Composition is skewed to low complexity over residues 443–473 (AEEA…QTPE) and 484–495 (TWKQTAQKWQQT). Residues 524–544 (LLALESAATGAAVVASVAFFV) traverse the membrane as a helical segment. Over 545-553 (LRSSGSGKA) the chain is Mitochondrial matrix.

This sequence belongs to the SHE9 family. As to quaternary structure, homooligomer.

The protein resides in the mitochondrion inner membrane. Functionally, required for the maintenance of the structure of the mitochondrial inner membrane. Involved in mitochondrial morphology. Causes growth arrest when highly overexpressed. In Neurospora crassa (strain ATCC 24698 / 74-OR23-1A / CBS 708.71 / DSM 1257 / FGSC 987), this protein is Sensitive to high expression protein 9 homolog, mitochondrial (she-9).